The following is a 327-amino-acid chain: Germination protease (327 aa).

Positions 1-7 are excised as a propeptide; sequence MNSVRTD.

The protein belongs to the peptidase A25 family. As to quaternary structure, homotetramer. Autoproteolytically processed. The inactive tetrameric zymogen termed p46 autoprocesses to a smaller form termed p41, which is active only during spore germination.

The catalysed reaction is Endopeptidase action with P4 Glu or Asp, P1 preferably Glu &gt; Asp, P1' hydrophobic and P2' Ala.. Functionally, initiates the rapid degradation of small, acid-soluble proteins during spore germination. The polypeptide is Germination protease (Clostridium acetobutylicum (strain ATCC 824 / DSM 792 / JCM 1419 / IAM 19013 / LMG 5710 / NBRC 13948 / NRRL B-527 / VKM B-1787 / 2291 / W)).